The following is a 291-amino-acid chain: Pantothenate synthetase (291 aa).

Position 33 to 40 (33 to 40 (MGALHEGH)) interacts with ATP. The active-site Proton donor is the His40. Gln64 is a (R)-pantoate binding site. Gln64 is a binding site for beta-alanine. 157-160 (GEKD) is a binding site for ATP. Gln163 lines the (R)-pantoate pocket. ATP contacts are provided by residues Val186 and 194–197 (LSSR).

The protein belongs to the pantothenate synthetase family. As to quaternary structure, homodimer.

It is found in the cytoplasm. It carries out the reaction (R)-pantoate + beta-alanine + ATP = (R)-pantothenate + AMP + diphosphate + H(+). It participates in cofactor biosynthesis; (R)-pantothenate biosynthesis; (R)-pantothenate from (R)-pantoate and beta-alanine: step 1/1. In terms of biological role, catalyzes the condensation of pantoate with beta-alanine in an ATP-dependent reaction via a pantoyl-adenylate intermediate. The protein is Pantothenate synthetase of Rubrobacter xylanophilus (strain DSM 9941 / JCM 11954 / NBRC 16129 / PRD-1).